Reading from the N-terminus, the 95-residue chain is Small ribosomal subunit protein uS19 (95 aa).

Residues 76–95 form a disordered region; the sequence is PTRTFRGHGGKKADKRGKLK. Over residues 80–95 the composition is skewed to basic residues; that stretch reads FRGHGGKKADKRGKLK.

This sequence belongs to the universal ribosomal protein uS19 family.

Functionally, protein S19 forms a complex with S13 that binds strongly to the 16S ribosomal RNA. The polypeptide is Small ribosomal subunit protein uS19 (Herpetosiphon aurantiacus (strain ATCC 23779 / DSM 785 / 114-95)).